The primary structure comprises 349 residues: Small ribosomal subunit biogenesis GTPase RsgA (349 aa).

Basic residues predominate over residues 1–11; it reads MSKKKLSKGQQ. The tract at residues 1–35 is disordered; it reads MSKKKLSKGQQRRVSANHQRRLKHADSKVEWDDSQ. Residues 111–272 enclose the CP-type G domain; it reads YDGLKPIAAN…VIDSPGVREF (162 aa). Residues 158 to 161 and 212 to 220 each bind GTP; these read NKID and GQSGVGKSS. Cys296, Cys301, His303, and Cys309 together coordinate Zn(2+).

Belongs to the TRAFAC class YlqF/YawG GTPase family. RsgA subfamily. Monomer. Associates with 30S ribosomal subunit, binds 16S rRNA. The cofactor is Zn(2+).

The protein localises to the cytoplasm. In terms of biological role, one of several proteins that assist in the late maturation steps of the functional core of the 30S ribosomal subunit. Helps release RbfA from mature subunits. May play a role in the assembly of ribosomal proteins into the subunit. Circularly permuted GTPase that catalyzes slow GTP hydrolysis, GTPase activity is stimulated by the 30S ribosomal subunit. The sequence is that of Small ribosomal subunit biogenesis GTPase RsgA from Dickeya dadantii (strain 3937) (Erwinia chrysanthemi (strain 3937)).